The following is a 731-amino-acid chain: T-cell activation Rho GTPase-activating protein (731 aa).

Residues 88–277 (QPLSIICGDS…FLIDNCFEIF (190 aa)) enclose the Rho-GAP domain. 3 disordered regions span residues 288 to 421 (TSDD…AEDP), 464 to 507 (SLDA…IKKH), and 641 to 662 (HHVE…GLSP). The span at 299-311 (SDVSTLQNDSAYD) shows a compositional bias: polar residues. Low complexity predominate over residues 319 to 329 (SNSSSGISSPS). The segment covering 380–399 (SMPSSQECLESRVTNQTLTK) has biased composition (polar residues). Ser400 is modified (phosphoserine). Positions 464 to 480 (SLDASSDSSPVASPSSP) are enriched in low complexity. Composition is skewed to basic and acidic residues over residues 494–503 (KTEKGKPSRE) and 641–652 (HHVEDSRHRGSK).

Functionally, may function as a GTPase-activating protein and may play important roles during T-cell activation. The polypeptide is T-cell activation Rho GTPase-activating protein (TAGAP) (Homo sapiens (Human)).